The primary structure comprises 315 residues: MSANESVVTADLKPRVPSTGSVDVLIVSGRSGSGKTSVLNILEDLGYYVIDNMPLSLLSDAAHKLTEDGGITNLALGVDIRTLKADSASFSAIYDTLLNSYGPDKVRIMYVTAQESVLVARFAATRRVHPLMAVNDYEIKNLPSAIIKETETLRPISGNADITIDTSQLNIHQLKELVREYVGADNQITVNVLSFGFKYGVPIDADFVFDVRILPNPHWEPQLRVKTGKDTEVAAFFANFPQVEEMKQDIYRYLDRWLPEFLHNNRHTVTVAVGCTGGKHRSVFLAESLYSMLSESLPREIKVMVKHREKAHWKA.

Residue 29-36 (GRSGSGKT) coordinates ATP. 79-82 (DIRT) lines the GTP pocket.

This sequence belongs to the RapZ-like family.

In terms of biological role, displays ATPase and GTPase activities. This chain is Nucleotide-binding protein PsycPRwf_2129, found in Psychrobacter sp. (strain PRwf-1).